We begin with the raw amino-acid sequence, 198 residues long: uncharacterized protein (198 aa).

This is an uncharacterized protein from Bacillus subtilis (strain 168).